The following is a 342-amino-acid chain: N-acetyl-gamma-glutamyl-phosphate reductase (342 aa).

The active site involves cysteine 146.

It belongs to the NAGSA dehydrogenase family. Type 1 subfamily.

The protein localises to the cytoplasm. The catalysed reaction is N-acetyl-L-glutamate 5-semialdehyde + phosphate + NADP(+) = N-acetyl-L-glutamyl 5-phosphate + NADPH + H(+). The protein operates within amino-acid biosynthesis; L-arginine biosynthesis; N(2)-acetyl-L-ornithine from L-glutamate: step 3/4. In terms of biological role, catalyzes the NADPH-dependent reduction of N-acetyl-5-glutamyl phosphate to yield N-acetyl-L-glutamate 5-semialdehyde. This chain is N-acetyl-gamma-glutamyl-phosphate reductase, found in Streptomyces avermitilis (strain ATCC 31267 / DSM 46492 / JCM 5070 / NBRC 14893 / NCIMB 12804 / NRRL 8165 / MA-4680).